Reading from the N-terminus, the 715-residue chain is MVVATTIALYASPASTVCSTAHQINAHISCDLDLNSRSSSASSSTSSPTIGGLSLLFSGASVKSSSSSSSSHPSVGEELASIRHDRSEDRTLSGSFCYSPSKFIGSSYLKRDHQSPVSVLHGPISSGNSPPMRISRDRNLDGGSALRVGSSRLFNGFVRKAIGSCVDYDTDSVLVDEQLPFTMDDGFEGERRQPYARDLLRRAQLKHKIFEDESVIKAFYEAEKAHRGQMRATGDPYLQHCVETAMLLADIGANSTVVVAGILHDTLDDSFMSYDYILRTFGSGVADLVEGVSKLSQLSKLARENNTACKTVEADRLHTMFLAMADARAVLIKLADRLHNMMTLYALPPVKRQRFAKETLEIFAPLANRLGISSWKVKLENLCFKHLHPDQHHEMSDMLEDSFDEAMITSAIEKLEQALKKEGISYHVVSGRHKSLYSIYCKMLKKKLTMDEIHDIHGLRLIVDNEKDCYKALGVVHKLWSEVPGKLKDYISHPKFNGYQSLHTVVMGDGTIPLEVQIRTKEMHLQAEFGFAAHWRYKEGDCKHSSFVLQMVEWARWVVTWHFETMSKDGSSICSSEPLCSFPSHAEDCPFSYKPSGNQEGPVYVIVIENEKMTVQEFPENSTVSDLLRRAGPGSSRWSMYSIPAKEELRPRLNQTPVSDLKCKLKMGDVVELTPAIPDKSLTEYREEIQRMYDRGLAFSRPHRAATGTMVGWGS.

The transit peptide at methionine 1 to serine 64 directs the protein to the chloroplast. Low complexity predominate over residues serine 65–serine 74. The interval serine 65–histidine 84 is disordered. The HD domain maps to tyrosine 237 to methionine 341.

This sequence belongs to the RelA/SpoT family. As to expression, expressed in roots, hypocotyls, shoots, cotyledons, rosette and cauline leaves, stems, petals, sepals, stamens, pistils and siliques.

Its subcellular location is the plastid. The protein resides in the chloroplast. It carries out the reaction GTP + ATP = guanosine 3'-diphosphate 5'-triphosphate + AMP. In terms of biological role, possesses ppGpp (guanosine 3'-diphosphate 5'-diphosphate) synthetase activity in vitro and is able to functionally complement E.coli relA mutants. May be involved in a rapid plant ppGpp-mediated response to pathogens and other stresses. This Arabidopsis thaliana (Mouse-ear cress) protein is Probable GTP diphosphokinase RSH3, chloroplastic (RSH3).